A 473-amino-acid chain; its full sequence is Proline--tRNA ligase (473 aa).

This sequence belongs to the class-II aminoacyl-tRNA synthetase family. ProS type 3 subfamily. Homodimer.

It is found in the cytoplasm. The catalysed reaction is tRNA(Pro) + L-proline + ATP = L-prolyl-tRNA(Pro) + AMP + diphosphate. In terms of biological role, catalyzes the attachment of proline to tRNA(Pro) in a two-step reaction: proline is first activated by ATP to form Pro-AMP and then transferred to the acceptor end of tRNA(Pro). The chain is Proline--tRNA ligase from Mesoplasma florum (strain ATCC 33453 / NBRC 100688 / NCTC 11704 / L1) (Acholeplasma florum).